A 425-amino-acid chain; its full sequence is MKYLILILIFFIEINNGSRLINSGNLFSELKDYYIPENLNYYSGGYSEQHCKDSSYITIPLGVTGGLDEGSLSSFLLTKKGSSLFIGLDAGTVWQGVRRLTMLQDFNSVFNITYPPWATLPEQRATWFIKNHIQGYLIGHSHLDHVGGLIVESAEDQLSPKKNELEVSQPEIYRGCIEMIHKMGYVSDFPNITSIPDQKKPIIGINETLYSMATDLFNGFVWPSLPNYGRYSYYYLGNGNQYSFKDLTPYANKYVTKVQNDFPFNHLVKSFEICHDSLTSTAFILTDSQSGEQIVFFSDTGISTTKCDWEFKILQVWRNIKIDKLKAVYIESSFTNEVADNVLFGHLRPKDIMKLMDSLLENSIQTSPPKTNLKHVKLIIEHIKPQVGMNQYYLTSQRMVYQQLQEINNHGVKVIIPNQGVPICL.

Positions 1–17 (MKYLILILIFFIEINNG) are cleaved as a signal peptide.

The protein belongs to the cyclic nucleotide phosphodiesterase class-II family.

It is found in the secreted. The protein localises to the extracellular space. Its subcellular location is the cell surface. The enzyme catalyses 3',5'-cyclic AMP + H2O = AMP + H(+). It carries out the reaction 3',5'-cyclic GMP + H2O = GMP + H(+). Inhibited by dithiotreitol (DTT). Functionally, phosphodiesterase with dual cAMP/cGMP specificity. However, displays a preference for cAMP over cGMP. Seems to regulate cAMP/cGMP concentration especially during cell aggregation. The protein is cAMP/cGMP-dependent 3',5'-cAMP/cGMP phosphodiesterase 7 (pde7) of Dictyostelium discoideum (Social amoeba).